Here is a 236-residue protein sequence, read N- to C-terminus: Ribonuclease 3 (236 aa).

One can recognise an RNase III domain in the interval 13–138 (TEKVFKISGY…LIGAIYVDGG (126 aa)). Position 51 (Glu51) interacts with Mg(2+). Asp55 is a catalytic residue. Mg(2+)-binding residues include Asn124 and Glu127. Glu127 is a catalytic residue. Residues 164–232 (DAKTALQEWA…AKLMLEKVTK (69 aa)) enclose the DRBM domain.

The protein belongs to the ribonuclease III family. In terms of assembly, homodimer. Mg(2+) is required as a cofactor.

The protein resides in the cytoplasm. It carries out the reaction Endonucleolytic cleavage to 5'-phosphomonoester.. In terms of biological role, digests double-stranded RNA. Involved in the processing of primary rRNA transcript to yield the immediate precursors to the large and small rRNAs (23S and 16S). Processes some mRNAs, and tRNAs when they are encoded in the rRNA operon. Processes pre-crRNA and tracrRNA of type II CRISPR loci if present in the organism. This chain is Ribonuclease 3, found in Anaplasma phagocytophilum (strain HZ).